The primary structure comprises 2235 residues: Bridge-like lipid transfer protein family member 2 (2235 aa).

The N-terminal stretch at 1 to 31 is a signal peptide; the sequence is MPLFFSALLVLLLVALSALFLGRWLVVRLAT. The segment at 29–108 is transmembrane domain; that stretch reads LATKWCQRKL…LQKVSDLSAP (80 aa). Ser563 carries the phosphoserine modification. Asn730 carries N-linked (GlcNAc...) asparagine glycosylation. The disordered stretch occupies residues 1495–1529; that stretch reads PQMPAKKPKRGVPTSASAPPRVNTPSFSGQPDKGS. Positions 1813–1885 form a coiled coil; it reads SILHLQEAVR…LNILIRCFKD (73 aa). Residues Ser1846, Ser2090, and Ser2094 each carry the phosphoserine modification. The disordered stretch occupies residues 2074–2099; sequence GKGVAQGLTRSSGVRRSFRKSPEHPV.

This sequence belongs to the SABRE family. In terms of tissue distribution, expressed in pancreas, placenta and up-regulated in breast carcinoma epithelial cells, ductal in situ carcinoma (DCIS), invasive breast carcinoma (IBC) and metastatic breast carcinoma cells (MET).

Its subcellular location is the cell membrane. The protein resides in the endoplasmic reticulum membrane. It localises to the mitochondrion membrane. Functionally, tube-forming lipid transport protein which binds to phosphatidylinositols and affects phosphatidylinositol-4,5-bisphosphate (PtdIns-4,5-P2) distribution. This chain is Bridge-like lipid transfer protein family member 2, found in Homo sapiens (Human).